The sequence spans 448 residues: Probable glycine dehydrogenase (decarboxylating) subunit 1 (448 aa).

It belongs to the GcvP family. N-terminal subunit subfamily. The glycine cleavage system is composed of four proteins: P, T, L and H. In this organism, the P 'protein' is a heterodimer of two subunits.

The enzyme catalyses N(6)-[(R)-lipoyl]-L-lysyl-[glycine-cleavage complex H protein] + glycine + H(+) = N(6)-[(R)-S(8)-aminomethyldihydrolipoyl]-L-lysyl-[glycine-cleavage complex H protein] + CO2. The glycine cleavage system catalyzes the degradation of glycine. The P protein binds the alpha-amino group of glycine through its pyridoxal phosphate cofactor; CO(2) is released and the remaining methylamine moiety is then transferred to the lipoamide cofactor of the H protein. The chain is Probable glycine dehydrogenase (decarboxylating) subunit 1 from Pyrococcus furiosus (strain ATCC 43587 / DSM 3638 / JCM 8422 / Vc1).